Consider the following 85-residue polypeptide: Large ribosomal subunit protein bL27 (85 aa).

Over residues 1 to 10 (MAQKKGGGST) the composition is skewed to gly residues. The segment at 1–21 (MAQKKGGGSTRNGRDSQPKML) is disordered.

It belongs to the bacterial ribosomal protein bL27 family.

This chain is Large ribosomal subunit protein bL27, found in Polaromonas naphthalenivorans (strain CJ2).